Reading from the N-terminus, the 1007-residue chain is Probable inorganic carbon transporter subunit DabA (1007 aa).

C442, D444, H696, and C711 together coordinate Zn(2+).

This sequence belongs to the inorganic carbon transporter (TC 9.A.2) DabA family. Forms a complex with DabB. Requires Zn(2+) as cofactor.

It is found in the cell inner membrane. In terms of biological role, part of an energy-coupled inorganic carbon pump. The protein is Probable inorganic carbon transporter subunit DabA of Aquifex aeolicus (strain VF5).